A 331-amino-acid chain; its full sequence is 4-hydroxythreonine-4-phosphate dehydrogenase (331 aa).

Residues His136 and Thr137 each contribute to the substrate site. Residues His166, His211, and His266 each coordinate a divalent metal cation. The substrate site is built by Lys274, Asn283, and Arg292.

It belongs to the PdxA family. In terms of assembly, homodimer. The cofactor is Zn(2+). It depends on Mg(2+) as a cofactor. Co(2+) is required as a cofactor.

It localises to the cytoplasm. The catalysed reaction is 4-(phosphooxy)-L-threonine + NAD(+) = 3-amino-2-oxopropyl phosphate + CO2 + NADH. It participates in cofactor biosynthesis; pyridoxine 5'-phosphate biosynthesis; pyridoxine 5'-phosphate from D-erythrose 4-phosphate: step 4/5. In terms of biological role, catalyzes the NAD(P)-dependent oxidation of 4-(phosphooxy)-L-threonine (HTP) into 2-amino-3-oxo-4-(phosphooxy)butyric acid which spontaneously decarboxylates to form 3-amino-2-oxopropyl phosphate (AHAP). This chain is 4-hydroxythreonine-4-phosphate dehydrogenase, found in Thioalkalivibrio sulfidiphilus (strain HL-EbGR7).